Reading from the N-terminus, the 304-residue chain is tRNA (guanine(9)-N1)-methyltransferase (304 aa).

2 stretches are compositionally biased toward basic and acidic residues: residues 1-26 (MENKDALDIGKDDTNTSEADVSKNET) and 42-72 (RQQEWDAGREKRAEMRREKKRLRKEERKRKI). Positions 1-72 (MENKDALDIG…LRKEERKRKI (72 aa)) are disordered. Residues 81–276 (QKKRIRLGKV…EVIPKRKGIL (196 aa)) enclose the SAM-dependent MTase TRM10-type domain. S-adenosyl-L-methionine-binding positions include L183, G203, 207 to 211 (DKNRY), C215, L229, and 241 to 243 (KIL). The Proton acceptor role is filled by D207. The tract at residues 282–304 (SFDVSEDTRSQSNQSDSELEKEN) is disordered. Phosphoserine is present on S296.

It belongs to the class IV-like SAM-binding methyltransferase superfamily. TRM10 family. Monomer.

It localises to the cytoplasm. The protein localises to the nucleus. It catalyses the reaction guanosine(9) in tRNA + S-adenosyl-L-methionine = N(1)-methylguanosine(9) in tRNA + S-adenosyl-L-homocysteine + H(+). Functionally, S-adenosyl-L-methionine-dependent guanine N(1)-methyltransferase that catalyzes the formation of N(1)-methylguanine at position 9 (m1G9) in cytoplasmic tRNA. This is tRNA (guanine(9)-N1)-methyltransferase from Schizosaccharomyces pombe (strain 972 / ATCC 24843) (Fission yeast).